The chain runs to 209 residues: BAG family molecular chaperone regulator 1 (209 aa).

The Ubiquitin-like domain maps to 7–84; that stretch reads CSSVQTIVDI…IIVMGGKNAM (78 aa). The region spanning 107 to 193 is the BAG domain; it reads TYDVNLKDVA…TLLNQNDALL (87 aa).

In terms of assembly, homodimer or homotetramer.

Its function is as follows. May inhibit the chaperone activity of HSP70/HSC70 by promoting substrate release in an ATP-dependent manner. This is BAG family molecular chaperone regulator 1 (bag-1) from Caenorhabditis briggsae.